Reading from the N-terminus, the 440-residue chain is Proline--tRNA ligase (440 aa).

This sequence belongs to the class-II aminoacyl-tRNA synthetase family. ProS type 2 subfamily. As to quaternary structure, homodimer.

Its subcellular location is the cytoplasm. It carries out the reaction tRNA(Pro) + L-proline + ATP = L-prolyl-tRNA(Pro) + AMP + diphosphate. Its function is as follows. Catalyzes the attachment of proline to tRNA(Pro) in a two-step reaction: proline is first activated by ATP to form Pro-AMP and then transferred to the acceptor end of tRNA(Pro). The polypeptide is Proline--tRNA ligase (Xanthobacter autotrophicus (strain ATCC BAA-1158 / Py2)).